Consider the following 141-residue polypeptide: Universal stress protein A homolog (141 aa).

Belongs to the universal stress protein A family. In terms of assembly, homodimer.

It is found in the cytoplasm. In terms of biological role, required for resistance to DNA-damaging agents. The chain is Universal stress protein A homolog (uspA) from Haemophilus influenzae (strain ATCC 51907 / DSM 11121 / KW20 / Rd).